A 316-amino-acid polypeptide reads, in one-letter code: Ribosomal RNA small subunit methyltransferase H (316 aa).

S-adenosyl-L-methionine is bound by residues 35–37 (GGH), aspartate 55, phenylalanine 79, aspartate 101, and glutamine 108.

Belongs to the methyltransferase superfamily. RsmH family.

The protein localises to the cytoplasm. The enzyme catalyses cytidine(1402) in 16S rRNA + S-adenosyl-L-methionine = N(4)-methylcytidine(1402) in 16S rRNA + S-adenosyl-L-homocysteine + H(+). Its function is as follows. Specifically methylates the N4 position of cytidine in position 1402 (C1402) of 16S rRNA. The protein is Ribosomal RNA small subunit methyltransferase H of Vibrio campbellii (strain ATCC BAA-1116).